A 72-amino-acid polypeptide reads, in one-letter code: Small ribosomal subunit protein eS31 (72 aa).

Residues C32, C35, C51, and C54 each coordinate Zn(2+). Residues 32–54 (CPRCGSVMAYHKEPVPRWHCGKC) form a C4-type zinc finger.

It belongs to the eukaryotic ribosomal protein eS31 family. As to quaternary structure, part of the 30S ribosomal subunit. Zn(2+) is required as a cofactor.

This is Small ribosomal subunit protein eS31 from Caldivirga maquilingensis (strain ATCC 700844 / DSM 13496 / JCM 10307 / IC-167).